The chain runs to 486 residues: uncharacterized protein (486 aa).

This is an uncharacterized protein from Methanocaldococcus jannaschii (strain ATCC 43067 / DSM 2661 / JAL-1 / JCM 10045 / NBRC 100440) (Methanococcus jannaschii).